Consider the following 249-residue polypeptide: Chitooligosaccharide deacetylase (249 aa).

2 residues coordinate Mg(2+): His-61 and His-125.

Belongs to the YdjC deacetylase family. ChbG subfamily. Homodimer. It depends on Mg(2+) as a cofactor.

Its subcellular location is the cytoplasm. The enzyme catalyses N,N'-diacetylchitobiose + H2O = N-acetyl-beta-D-glucosaminyl-(1-&gt;4)-D-glucosamine + acetate. The catalysed reaction is diacetylchitobiose-6'-phosphate + H2O = N'-monoacetylchitobiose-6'-phosphate + acetate. It functions in the pathway glycan degradation; chitin degradation. Its function is as follows. Involved in the degradation of chitin. ChbG is essential for growth on the acetylated chitooligosaccharides chitobiose and chitotriose but is dispensable for growth on cellobiose and chitosan dimer, the deacetylated form of chitobiose. Deacetylation of chitobiose-6-P and chitotriose-6-P is necessary for both the activation of the chb promoter by the regulatory protein ChbR and the hydrolysis of phosphorylated beta-glucosides by the phospho-beta-glucosidase ChbF. Catalyzes the removal of only one acetyl group from chitobiose-6-P to yield monoacetylchitobiose-6-P, the inducer of ChbR and the substrate of ChbF. In Escherichia coli O9:H4 (strain HS), this protein is Chitooligosaccharide deacetylase.